The sequence spans 305 residues: UPF0450 protein C17orf58 homolog (305 aa).

Positions 1-22 (MTARALWLLCLIVGWSPEAPVA) are cleaved as a signal peptide. The interval 18 to 160 (EAPVAERKAP…DREPETQSCA (143 aa)) is disordered. Over residues 21-39 (VAERKAPPPHRKPDSRETP) the composition is skewed to basic and acidic residues. Disulfide bonds link Cys159/Cys233, Cys163/Cys237, and Cys174/Cys304. The NTR domain occupies 159–304 (CARACSADAD…QVRGATHTQC (146 aa)).

The protein belongs to the UPF0450 family.

In Mus musculus (Mouse), this protein is UPF0450 protein C17orf58 homolog.